The sequence spans 481 residues: MSAQVATVGKITQVLGPVIDVEFPPGGLPEVYTALKVTNTSISAEADNLTIEVAQHLGENMVRCISMDSTEGLARGQAVKNTGAPIQVPVGQGTLGRILNVIGEPVDERGPITSSQTWPIHRPAPTFVDQDVRVQAFETGIKVIDLLGPYTRGGKIGLFGGAGVGKTVLLMELIVNVAKERGGFSVFAGVGERTREGNDLYHEMQEGNVSTPRTWMESQCVLVYGQMNEPPGARARVALSALTIAEYFRDMEGHDVLLFVDNIFRFTQAGSEVSALLGRIPSAVGYQPTLSTEMGALQERITSTTKGSVTSVQAIYVPADDLTDPAPATTFAHLDATTVLNRAISELGIYPAVDPLDSTSRILDPNVVGPEHYAVARKVQGILQKYKELQDIIAILGMDELSETDKLTVARARKIQKFLSQPFHVAEVFTGAPGRYVELKDTIQGFKELAEGKHDDLPEAAFYMVGNINEAIEKARKLAAA.

160–167 serves as a coordination point for ATP; that stretch reads GGAGVGKT.

It belongs to the ATPase alpha/beta chains family. In terms of assembly, F-type ATPases have 2 components, CF(1) - the catalytic core - and CF(0) - the membrane proton channel. CF(1) has five subunits: alpha(3), beta(3), gamma(1), delta(1), epsilon(1). CF(0) has three main subunits: a(1), b(2) and c(9-12). The alpha and beta chains form an alternating ring which encloses part of the gamma chain. CF(1) is attached to CF(0) by a central stalk formed by the gamma and epsilon chains, while a peripheral stalk is formed by the delta and b chains.

It localises to the cell inner membrane. The enzyme catalyses ATP + H2O + 4 H(+)(in) = ADP + phosphate + 5 H(+)(out). Functionally, produces ATP from ADP in the presence of a proton gradient across the membrane. The catalytic sites are hosted primarily by the beta subunits. This is ATP synthase subunit beta from Stigmatella aurantiaca.